A 1463-amino-acid chain; its full sequence is Collagen alpha-1(III) chain (1463 aa).

A signal peptide spans 1–23 (MMSFVQCGTWFLLTLLHPSLILA). Residues 24–154 (QQSNVDELGC…CPTGGQNYSP (131 aa)) constitute a propeptide, N-terminal propeptide. The 60-residue stretch at 31–90 (LGCNYLGQSYESRDVWKPEPCQICVCDSGSVLCDDIMCDDEPLDCPNPEIPFGECCAICP) folds into the VWFC domain. The disordered stretch occupies residues 97 to 1195 (PVIPDGNRPQ…PGPPGAPGPC (1099 aa)). The span at 147 to 156 (TGGQNYSPQF) shows a compositional bias: polar residues. The interval 155–169 (QFDSYDVKSGVGGMG) is nonhelical region (N-terminal). Positions 164–173 (GVGGMGGYPG) are enriched in gly residues. A triple-helical region region spans residues 170 to 1195 (GYPGPAGPPG…PGPPGAPGPC (1026 aa)). Residues 174–184 (PAGPPGPPGPP) are compositionally biased toward pro residues. Low complexity predominate over residues 186-198 (SSGHPGSPGSPGY). The segment covering 228–240 (KDGESGRPGRPGE) has biased composition (basic and acidic residues). Residues 250 to 259 (KGPAGIPGFP) show a composition bias toward low complexity. Residue Lys-262 is modified to 5-hydroxylysine; alternate. O-linked (Gal...) hydroxylysine; alternate glycosylation occurs at Lys-262. Basic and acidic residues predominate over residues 265 to 276 (RGFDGRNGEKGE). 5-hydroxylysine is present on Lys-283. 2 stretches are compositionally biased toward low complexity: residues 310–321 (PGLPGAAGARGN) and 354–379 (PAGS…AGAQ). Over residues 389 to 398 (GSPGGKGEMG) the composition is skewed to gly residues. Composition is skewed to low complexity over residues 399–429 (PAGI…QRGP) and 481–502 (PGER…PGEK). Gly residues predominate over residues 527–548 (GTPGGPGIRGMPGSPGGPGNDG). Composition is skewed to low complexity over residues 606–615 (PAGKNGETGP) and 637–652 (QGLQ…PGEN). A compositionally biased stretch (gly residues) spans 668–677 (GVPGGKGDSG). Positions 678-691 (APGERGPPGTAGTP) are enriched in low complexity. The span at 692 to 708 (GLRGGAGPPGPEGGKGP) shows a compositional bias: gly residues. A compositionally biased stretch (pro residues) spans 709 to 718 (AGPPGPPGTS). The span at 822–834 (AKGERGAPGEKGE) shows a compositional bias: basic and acidic residues. The span at 835–849 (GGPPGAAGPPGGSGP) shows a compositional bias: gly residues. Lys-859 carries the post-translational modification 5-hydroxylysine. Over residues 863 to 879 (GSPGGPGAAGFPGGRGL) the composition is skewed to gly residues. Over residues 889–906 (PGPPGPSGAPGKDGPPGP) the composition is skewed to pro residues. Composition is skewed to low complexity over residues 907 to 934 (AGNS…KGPP) and 945 to 960 (PLGI…LAGP). The residue at position 976 (Lys-976) is a 5-hydroxylysine. Residues 1045-1054 (PGHPGPPGPV) show a composition bias toward pro residues. Low complexity predominate over residues 1068–1084 (PAGPSGAPGPAGARGAP). Lys-1093 and Lys-1105 each carry 5-hydroxylysine. Positions 1120-1132 (PGAAGHQGAVGSP) are enriched in low complexity. Positions 1180-1192 (PGQPGPPGPPGAP) are enriched in pro residues. Positions 1219–1463 (DDPMDFKINT…GVDIGPVCFL (245 aa)) are cleaved as a propeptide — C-terminal propeptide. Residues 1229 to 1463 (EEIMSSLKSV…GVDIGPVCFL (235 aa)) form the Fibrillar collagen NC1 domain. 3 cysteine pairs are disulfide-bonded: Cys-1259–Cys-1291, Cys-1299–Cys-1461, and Cys-1369–Cys-1414. 5 residues coordinate Ca(2+): Asp-1277, Asn-1279, Gln-1280, Cys-1282, and Asp-1285.

It belongs to the fibrillar collagen family. As to quaternary structure, trimers of identical alpha 1(III) chains. The chains are linked to each other by interchain disulfide bonds. Trimers are also cross-linked via hydroxylysines. Interacts with ADGRG1. Post-translationally, O-glycosylated. In terms of processing, prolines at the third position of the tripeptide repeating unit (G-X-Y) are hydroxylated in some or all of the chains.

The protein resides in the secreted. The protein localises to the extracellular space. Its subcellular location is the extracellular matrix. Collagen type III occurs in most soft connective tissues along with type I collagen. Involved in regulation of cortical development. Is the major ligand of ADGRG1 in the developing brain and binding to ADGRG1 inhibits neuronal migration and activates the RhoA pathway by coupling ADGRG1 to GNA13 and possibly GNA12. The chain is Collagen alpha-1(III) chain (Col3a1) from Rattus norvegicus (Rat).